We begin with the raw amino-acid sequence, 287 residues long: 4-hydroxybenzoate octaprenyltransferase (287 aa).

7 consecutive transmembrane segments (helical) span residues 23-40, 99-119, 141-161, 163-183, 213-233, 235-255, and 266-286; these read IGSLLLLWPTLWALWLAG, LFVVLVLLAFGLVLTLNTMTI, LPQFVLGAAFGWSIPMAYAAV, ESLPATCWMMFLAYICWTVAY, LIIGLLQFSMLALLLILGTMT, LGMPYYISLLVAGGMFIYQQI, and FKAFHNNKYAGMAIFIGVLFG.

This sequence belongs to the UbiA prenyltransferase family. The cofactor is Mg(2+).

It localises to the cell inner membrane. It carries out the reaction all-trans-octaprenyl diphosphate + 4-hydroxybenzoate = 4-hydroxy-3-(all-trans-octaprenyl)benzoate + diphosphate. The protein operates within cofactor biosynthesis; ubiquinone biosynthesis. Its function is as follows. Catalyzes the prenylation of para-hydroxybenzoate (PHB) with an all-trans polyprenyl group. Mediates the second step in the final reaction sequence of ubiquinone-8 (UQ-8) biosynthesis, which is the condensation of the polyisoprenoid side chain with PHB, generating the first membrane-bound Q intermediate 3-octaprenyl-4-hydroxybenzoate. The polypeptide is 4-hydroxybenzoate octaprenyltransferase (Pectobacterium carotovorum subsp. carotovorum (strain PC1)).